The following is a 617-amino-acid chain: Solute carrier family 2, facilitated glucose transporter member 12 (617 aa).

Residues 1 to 29 (MVPVENTEGPSLLNQKGTAVETEGSGSRH) are disordered. Topologically, residues 1-44 (MVPVENTEGPSLLNQKGTAVETEGSGSRHPPWARGCGMFTFLSS) are cytoplasmic. Residues 8-17 (EGPSLLNQKG) are compositionally biased toward polar residues. The chain crosses the membrane as a helical span at residues 45 to 65 (VTAAVSGLLVGYELGIISGAL). Topologically, residues 66–80 (LQIKTLLALSCHEQE) are extracellular. A helical transmembrane segment spans residues 81 to 101 (MVVSSLVIGALLASLTGGVLI). Residues 102–115 (DRYGRRTAIILSSC) are Cytoplasmic-facing. Residues 116–136 (LLGLGSLVLILSLSYTVLIVG) traverse the membrane as a helical segment. Residue Arg-137 is a topological domain, extracellular. A helical transmembrane segment spans residues 138–158 (IAIGVSISLSSIATCVYIAEI). At 159-172 (APQHRRGLLVSLNE) the chain is on the cytoplasmic side. Residues 173-193 (LMIVIGILSAYISNYAFANVF) traverse the membrane as a helical segment. The Extracellular portion of the chain corresponds to 194–197 (HGWK). The helical transmembrane segment at 198–218 (YMFGLVIPLGVLQAIAMYFLP) threads the bilayer. Topologically, residues 219 to 278 (PSPRFLVMKGQEGAASKVLGRLRALSDTTEELTVIKSSLKDEYQYSFWDLFRSKDNMRTR) are cytoplasmic. A helical transmembrane segment spans residues 279–299 (IMIGLTLVFFVQITGQPNILF). The Extracellular portion of the chain corresponds to 300–317 (YASTVLKSVGFQSNEAAS). Residues 318–338 (LASTGVGVVKVISTIPATLLV) traverse the membrane as a helical segment. The Cytoplasmic segment spans residues 339–345 (DHVGSKT). The helical transmembrane segment at 346–366 (FLCIGSSVMAASLVTMGIVNL) threads the bilayer. Over 367-466 (NIHMNFTHIC…PAFLKWLSLA (100 aa)) the chain is Extracellular. Residues Asn-371, Asn-383, Asn-396, and Asn-401 are each glycosylated (N-linked (GlcNAc...) asparagine). Residues 467–487 (SLLVYVAAFSIGLGPMPWLVL) form a helical membrane-spanning segment. At 488-498 (SEIFPGGIRGR) the chain is on the cytoplasmic side. The chain crosses the membrane as a helical span at residues 499–519 (AMALTSSMNWGINLLISLTFL). Over 520 to 528 (TVTDLIGLP) the chain is Extracellular. The helical transmembrane segment at 529 to 549 (WVCFIYTIMSLASLLFVVMFI) threads the bilayer. Topologically, residues 550 to 617 (PETKGCSLEQ…GQSRQLSPET (68 aa)) are cytoplasmic.

This sequence belongs to the major facilitator superfamily. Sugar transporter (TC 2.A.1.1) family. Glucose transporter subfamily. As to expression, predominantly expressed in skeletal muscle, heart and prostate, with lower levels in brain, placenta and kidney.

The protein localises to the cell membrane. It is found in the endomembrane system. The protein resides in the cytoplasm. It localises to the perinuclear region. The catalysed reaction is D-glucose(out) = D-glucose(in). In terms of biological role, insulin-independent facilitative glucose transporter. The protein is Solute carrier family 2, facilitated glucose transporter member 12 of Homo sapiens (Human).